Here is a 1105-residue protein sequence, read N- to C-terminus: Protein phosphatase 1 regulatory subunit 26 (1105 aa).

Disordered regions lie at residues 228-382, 444-468, 504-526, and 589-748; these read LNDK…NKLA, QSTYVIPTEPPPPPPEPQCDSDSLV, TSPELGSQSSKLSLTHKRKAKAM, and LNRG…DSDD. Over residues 275-285 the composition is skewed to basic and acidic residues; it reads LLRKHASDSKL. Over residues 306-317 the composition is skewed to low complexity; sequence TKTSSPSPKSTP. A compositionally biased stretch (polar residues) spans 359 to 368; it reads SPTSANSLTH. Positions 451–460 are enriched in pro residues; that stretch reads TEPPPPPPEP. Residues 504–516 are compositionally biased toward polar residues; sequence TSPELGSQSSKLS. Residues 602-612 show a composition bias toward low complexity; the sequence is SYSSGDKSSSL. Basic residues predominate over residues 628–647; it reads SKRKYKKRPKDGKSQCKKRV. The span at 686-701 shows a compositional bias: basic and acidic residues; it reads NSLEKSKKRREEKAVE. Polar residues predominate over residues 705–715; the sequence is PSCSSSPQGNK. The segment covering 733-742 has biased composition (basic and acidic residues); that stretch reads RALDDAHESS.

The protein localises to the nucleus. It is found in the nucleolus. Functionally, may inhibit phosphatase activity of protein phosphatase 1 (PP1) complexes. May positively regulate cell proliferation. The protein is Protein phosphatase 1 regulatory subunit 26 (ppp1r26) of Xenopus laevis (African clawed frog).